Here is a 196-residue protein sequence, read N- to C-terminus: Ribonuclease HII (196 aa).

The region spanning Arg9–Glu196 is the RNase H type-2 domain. Asp15, Glu16, and Asp107 together coordinate a divalent metal cation.

Belongs to the RNase HII family. Mn(2+) serves as cofactor. The cofactor is Mg(2+).

It is found in the cytoplasm. It carries out the reaction Endonucleolytic cleavage to 5'-phosphomonoester.. Endonuclease that specifically degrades the RNA of RNA-DNA hybrids. The polypeptide is Ribonuclease HII (Aeromonas hydrophila subsp. hydrophila (strain ATCC 7966 / DSM 30187 / BCRC 13018 / CCUG 14551 / JCM 1027 / KCTC 2358 / NCIMB 9240 / NCTC 8049)).